A 346-amino-acid polypeptide reads, in one-letter code: MTDDRIIGAGATREDDAADASIRPKRLADYLGQVPVREQMEIYIQAAKGRGDALDHVLIFGPPGLGKTTLSHVIANELGVALRVTSGPVIEKAGDLAALLTNLQPHDVLFIDEIHRLSPVVEEVLYPAMEDFQIDIMIGEGPAARSIKIDLPPFTLIGATTRAGLLTAPLRDRFGIVQRLEFYSVEELTRIVRRSAAILAIDCTADGAGEIARRARGTPRIANRLLRRVRDYAQVKAGGHIDEAVAQAAMKMLKVDPEGFDELDRRLLKTMVDYFDGGPVGIESLAAALSEERGTLEDVVEPYLIQQGFLVRTARGRMATHKAYRHMGLKPKNPPQDLFAEVPDVG.

The segment at 2–183 (TDDRIIGAGA…FGIVQRLEFY (182 aa)) is large ATPase domain (RuvB-L). ATP-binding positions include isoleucine 22, arginine 23, glycine 64, lysine 67, threonine 68, threonine 69, 130–132 (EDF), arginine 173, tyrosine 183, and arginine 220. Threonine 68 lines the Mg(2+) pocket. Residues 184 to 254 (SVEELTRIVR…VAQAAMKMLK (71 aa)) are small ATPAse domain (RuvB-S). The interval 257–346 (PEGFDELDRR…DLFAEVPDVG (90 aa)) is head domain (RuvB-H). The DNA site is built by arginine 293, arginine 312, and arginine 317.

Belongs to the RuvB family. As to quaternary structure, homohexamer. Forms an RuvA(8)-RuvB(12)-Holliday junction (HJ) complex. HJ DNA is sandwiched between 2 RuvA tetramers; dsDNA enters through RuvA and exits via RuvB. An RuvB hexamer assembles on each DNA strand where it exits the tetramer. Each RuvB hexamer is contacted by two RuvA subunits (via domain III) on 2 adjacent RuvB subunits; this complex drives branch migration. In the full resolvosome a probable DNA-RuvA(4)-RuvB(12)-RuvC(2) complex forms which resolves the HJ.

It is found in the cytoplasm. The catalysed reaction is ATP + H2O = ADP + phosphate + H(+). In terms of biological role, the RuvA-RuvB-RuvC complex processes Holliday junction (HJ) DNA during genetic recombination and DNA repair, while the RuvA-RuvB complex plays an important role in the rescue of blocked DNA replication forks via replication fork reversal (RFR). RuvA specifically binds to HJ cruciform DNA, conferring on it an open structure. The RuvB hexamer acts as an ATP-dependent pump, pulling dsDNA into and through the RuvAB complex. RuvB forms 2 homohexamers on either side of HJ DNA bound by 1 or 2 RuvA tetramers; 4 subunits per hexamer contact DNA at a time. Coordinated motions by a converter formed by DNA-disengaged RuvB subunits stimulates ATP hydrolysis and nucleotide exchange. Immobilization of the converter enables RuvB to convert the ATP-contained energy into a lever motion, pulling 2 nucleotides of DNA out of the RuvA tetramer per ATP hydrolyzed, thus driving DNA branch migration. The RuvB motors rotate together with the DNA substrate, which together with the progressing nucleotide cycle form the mechanistic basis for DNA recombination by continuous HJ branch migration. Branch migration allows RuvC to scan DNA until it finds its consensus sequence, where it cleaves and resolves cruciform DNA. The chain is Holliday junction branch migration complex subunit RuvB from Stenotrophomonas maltophilia (strain R551-3).